The following is a 348-amino-acid chain: MDDNKKKMLESALKSIDKAFGKGTLVRLGDKEVEKIDSISTGSVGLDIALGIGGVPKGRIVEIYGPESSGKTTLTLHIIAECQKKGGVCAFVDAEHALDVKYAANLGVDVDNLYVSQPDFGEQALDIVETLAKSGAIDLVVVDSVAALTPKSEIEGDMGDQHVGLQARLMSQALRKLTGVVHKMGTTVIFINQIRMKIGQMGYGSPETTTGGNALKFYASVRLDIRRIATLKQNDESIGNRAKVKVVKNKVAPPFKVAEFDIMFGEGISKMGELVDYGVKLDIVDKSGSWFSYKDKKLGQGRENAKIYLKENPKVADEILAAIREQMGSESLSSSSDDDDIKEESGEE.

ATP is bound at residue 65–72; it reads GPESSGKT. Residues 326–348 form a disordered region; it reads QMGSESLSSSSDDDDIKEESGEE. Positions 336–348 are enriched in acidic residues; the sequence is SDDDDIKEESGEE.

The protein belongs to the RecA family.

Its subcellular location is the cytoplasm. Its function is as follows. Can catalyze the hydrolysis of ATP in the presence of single-stranded DNA, the ATP-dependent uptake of single-stranded DNA by duplex DNA, and the ATP-dependent hybridization of homologous single-stranded DNAs. It interacts with LexA causing its activation and leading to its autocatalytic cleavage. In Campylobacter hominis (strain ATCC BAA-381 / DSM 21671 / CCUG 45161 / LMG 19568 / NCTC 13146 / CH001A), this protein is Protein RecA.